Reading from the N-terminus, the 475-residue chain is ATP synthase subunit beta (475 aa).

154–161 provides a ligand contact to ATP; it reads GGAGVGKT.

This sequence belongs to the ATPase alpha/beta chains family. In terms of assembly, F-type ATPases have 2 components, CF(1) - the catalytic core - and CF(0) - the membrane proton channel. CF(1) has five subunits: alpha(3), beta(3), gamma(1), delta(1), epsilon(1). CF(0) has three main subunits: a(1), b(2) and c(9-12). The alpha and beta chains form an alternating ring which encloses part of the gamma chain. CF(1) is attached to CF(0) by a central stalk formed by the gamma and epsilon chains, while a peripheral stalk is formed by the delta and b chains.

It localises to the cell inner membrane. It catalyses the reaction ATP + H2O + 4 H(+)(in) = ADP + phosphate + 5 H(+)(out). Its function is as follows. Produces ATP from ADP in the presence of a proton gradient across the membrane. The catalytic sites are hosted primarily by the beta subunits. The protein is ATP synthase subunit beta of Hyphomonas neptunium (strain ATCC 15444).